Here is a 213-residue protein sequence, read N- to C-terminus: Thiamine-phosphate synthase (213 aa).

Residues 40-44 and Asn-75 contribute to the 4-amino-2-methyl-5-(diphosphooxymethyl)pyrimidine site; that span reads QFREK. Asp-76 and Asp-95 together coordinate Mg(2+). Position 113 (Ser-113) interacts with 4-amino-2-methyl-5-(diphosphooxymethyl)pyrimidine. Residue 139–141 coordinates 2-[(2R,5Z)-2-carboxy-4-methylthiazol-5(2H)-ylidene]ethyl phosphate; the sequence is TPS. Position 142 (Lys-142) interacts with 4-amino-2-methyl-5-(diphosphooxymethyl)pyrimidine. 2-[(2R,5Z)-2-carboxy-4-methylthiazol-5(2H)-ylidene]ethyl phosphate-binding positions include Gly-171 and 191-192; that span reads IS.

The protein belongs to the thiamine-phosphate synthase family. The cofactor is Mg(2+).

The enzyme catalyses 2-[(2R,5Z)-2-carboxy-4-methylthiazol-5(2H)-ylidene]ethyl phosphate + 4-amino-2-methyl-5-(diphosphooxymethyl)pyrimidine + 2 H(+) = thiamine phosphate + CO2 + diphosphate. The catalysed reaction is 2-(2-carboxy-4-methylthiazol-5-yl)ethyl phosphate + 4-amino-2-methyl-5-(diphosphooxymethyl)pyrimidine + 2 H(+) = thiamine phosphate + CO2 + diphosphate. It catalyses the reaction 4-methyl-5-(2-phosphooxyethyl)-thiazole + 4-amino-2-methyl-5-(diphosphooxymethyl)pyrimidine + H(+) = thiamine phosphate + diphosphate. The protein operates within cofactor biosynthesis; thiamine diphosphate biosynthesis; thiamine phosphate from 4-amino-2-methyl-5-diphosphomethylpyrimidine and 4-methyl-5-(2-phosphoethyl)-thiazole: step 1/1. Condenses 4-methyl-5-(beta-hydroxyethyl)thiazole monophosphate (THZ-P) and 2-methyl-4-amino-5-hydroxymethyl pyrimidine pyrophosphate (HMP-PP) to form thiamine monophosphate (TMP). The protein is Thiamine-phosphate synthase of Staphylococcus aureus (strain MRSA252).